Here is a 453-residue protein sequence, read N- to C-terminus: Plasmepsin II (453 aa).

At 1–37 the chain is on the cytoplasmic side; the sequence is MDITVREHDFKHGFIKSNSTFDGLNIDNSKNKKKIQK. Positions 1 to 124 are excised as a propeptide; that stretch reads MDITVREHDF…SGLTKTNYLG (124 aa). A helical; Signal-anchor for type II membrane protein membrane pass occupies residues 38 to 58; the sequence is GFQILYVLLFCSVMCGLFYYV. Residues 59–453 are Lumenal-facing; it reads YENVWLQRDN…VGIALAKKNL (395 aa). A Peptidase A1 domain is found at 140 to 447; the sequence is FYGDAEVGDN…DYDNHSVGIA (308 aa). Asp158 is an active-site residue. The cysteines at positions 171 and 176 are disulfide-linked. Asp338 is a catalytic residue. Cysteines 373 and 409 form a disulfide.

Belongs to the peptidase A1 family. In terms of assembly, component of the hemozoin formation complex (HFC) composed of falcipains FP2A and/or FP2B, plasmepsins PMII, PMIII/HAP and PMIV, heme detoxifying protein HDP and falcilysin FLN. The HFC complex is involved in hemoglobin degradation and detoxification of heme in the food vacuole during the asexual blood stage. In terms of processing, not N-glycosylated. Proteolytically cleaved into the soluble active mature form in the digestive vacuole by cysteine protease falcipains; the process begins at the early ring stage. Proteolysis requires an acidic environment. In absence of falcipains, autoprocessing may serve as an alternate activation system.

The protein localises to the membrane. It is found in the vacuole lumen. It localises to the vacuole membrane. It catalyses the reaction Hydrolysis of the bonds linking certain hydrophobic residues in hemoglobin or globin. Also cleaves small molecules substrates such as Ala-Leu-Glu-Arg-Thr-Phe-|-Phe(NO2)-Ser-Phe-Pro-Thr.. Its activity is regulated as follows. Inhibited by pepstatin A. Its function is as follows. During the asexual blood stage, participates in initial cleavage of native host hemoglobin (Hb) resulting in Hb denaturation. May cleave preferentially denatured hemoglobin that has been cleaved by PMI. Digestion of host Hb is an essential step which provides the parasite with amino acids for protein synthesis, and regulates osmolarity. The protein is Plasmepsin II of Plasmodium falciparum (isolate HB3).